The chain runs to 295 residues: Bifunctional protein FolD (295 aa).

Residues 165–167 (GRS), serine 190, and isoleucine 231 contribute to the NADP(+) site.

It belongs to the tetrahydrofolate dehydrogenase/cyclohydrolase family. In terms of assembly, homodimer.

The enzyme catalyses (6R)-5,10-methylene-5,6,7,8-tetrahydrofolate + NADP(+) = (6R)-5,10-methenyltetrahydrofolate + NADPH. The catalysed reaction is (6R)-5,10-methenyltetrahydrofolate + H2O = (6R)-10-formyltetrahydrofolate + H(+). The protein operates within one-carbon metabolism; tetrahydrofolate interconversion. Its function is as follows. Catalyzes the oxidation of 5,10-methylenetetrahydrofolate to 5,10-methenyltetrahydrofolate and then the hydrolysis of 5,10-methenyltetrahydrofolate to 10-formyltetrahydrofolate. This is Bifunctional protein FolD from Nitrosomonas eutropha (strain DSM 101675 / C91 / Nm57).